The chain runs to 260 residues: MLKTRIIPCLDVKDGRVVKGVNFVSLRDAGDPVEQARAYDAAGADELMFLDITASSEGRGLILDVISRTAEVCFMPVSVGGGVRQVSDMRRLLLAGADKVSVNTAAVENPDLIAGGADAFGSQCVVVAIDAKAREDGSGWNVWTYGGRKDTGIDVVEWAAKVVERGAGEILLTSMDRDGAKIGYDIPLLQAVTGAVNVPVIASGGAGKTEHLIEAAREGHAAAVLAASIFHFGEISIGEAKQAMADAGIPVRLDALKGAA.

Active-site residues include Asp11 and Asp130.

It belongs to the HisA/HisF family. In terms of assembly, heterodimer of HisH and HisF.

The protein resides in the cytoplasm. The catalysed reaction is 5-[(5-phospho-1-deoxy-D-ribulos-1-ylimino)methylamino]-1-(5-phospho-beta-D-ribosyl)imidazole-4-carboxamide + L-glutamine = D-erythro-1-(imidazol-4-yl)glycerol 3-phosphate + 5-amino-1-(5-phospho-beta-D-ribosyl)imidazole-4-carboxamide + L-glutamate + H(+). It participates in amino-acid biosynthesis; L-histidine biosynthesis; L-histidine from 5-phospho-alpha-D-ribose 1-diphosphate: step 5/9. IGPS catalyzes the conversion of PRFAR and glutamine to IGP, AICAR and glutamate. The HisF subunit catalyzes the cyclization activity that produces IGP and AICAR from PRFAR using the ammonia provided by the HisH subunit. In Caulobacter vibrioides (strain ATCC 19089 / CIP 103742 / CB 15) (Caulobacter crescentus), this protein is Imidazole glycerol phosphate synthase subunit HisF (hisF).